The primary structure comprises 210 residues: Probable nicotinate-nucleotide adenylyltransferase (210 aa).

The protein belongs to the NadD family.

It catalyses the reaction nicotinate beta-D-ribonucleotide + ATP + H(+) = deamido-NAD(+) + diphosphate. It functions in the pathway cofactor biosynthesis; NAD(+) biosynthesis; deamido-NAD(+) from nicotinate D-ribonucleotide: step 1/1. Catalyzes the reversible adenylation of nicotinate mononucleotide (NaMN) to nicotinic acid adenine dinucleotide (NaAD). The sequence is that of Probable nicotinate-nucleotide adenylyltransferase from Streptococcus pyogenes serotype M18 (strain MGAS8232).